The following is a 215-amino-acid chain: UPF0323 lipoprotein jhp_0217 (215 aa).

Residues 1–27 (MKKPYRKISDYAIVGGLSALVMVSIVG) form the signal peptide. A lipid anchor (N-palmitoyl cysteine) is attached at Cys28. The S-diacylglycerol cysteine moiety is linked to residue Cys28. A compositionally biased stretch (polar residues) spans 158 to 169 (QRTYKSPQAYQR). A disordered region spans residues 158-215 (QRTYKSPQAYQRSQNSFSKSAPSASSMGTASKGQSGFFGSSRPTSSPAISSGTRGFNA). Residues 170 to 183 (SQNSFSKSAPSASS) are compositionally biased toward low complexity. A compositionally biased stretch (polar residues) spans 184 to 195 (MGTASKGQSGFF). A compositionally biased stretch (low complexity) spans 197–208 (SSRPTSSPAISS).

The protein belongs to the UPF0323 family.

It localises to the cell membrane. The polypeptide is UPF0323 lipoprotein jhp_0217 (Helicobacter pylori (strain J99 / ATCC 700824) (Campylobacter pylori J99)).